The primary structure comprises 227 residues: Cytochrome c oxidase subunit 2 (227 aa).

Topologically, residues 1–14 (MAYPFQLGLQDATS) are mitochondrial intermembrane. Residues 15–45 (PIMEELTNFHDHTLMIVFLISSLVLYIISLM) traverse the membrane as a helical segment. Topologically, residues 46–59 (LTTKLTHTSTMDAQ) are mitochondrial matrix. A helical membrane pass occupies residues 60–87 (EVETIWTILPAVILILIALPSLRILYMM). Residues 88-227 (DEINNPVLTV…HFENWSTSMI (140 aa)) are Mitochondrial intermembrane-facing. 6 residues coordinate Cu cation: His-161, Cys-196, Glu-198, Cys-200, His-204, and Met-207. A Mg(2+)-binding site is contributed by Glu-198.

Belongs to the cytochrome c oxidase subunit 2 family. In terms of assembly, component of the cytochrome c oxidase (complex IV, CIV), a multisubunit enzyme composed of 14 subunits. The complex is composed of a catalytic core of 3 subunits MT-CO1, MT-CO2 and MT-CO3, encoded in the mitochondrial DNA, and 11 supernumerary subunits COX4I, COX5A, COX5B, COX6A, COX6B, COX6C, COX7A, COX7B, COX7C, COX8 and NDUFA4, which are encoded in the nuclear genome. The complex exists as a monomer or a dimer and forms supercomplexes (SCs) in the inner mitochondrial membrane with NADH-ubiquinone oxidoreductase (complex I, CI) and ubiquinol-cytochrome c oxidoreductase (cytochrome b-c1 complex, complex III, CIII), resulting in different assemblies (supercomplex SCI(1)III(2)IV(1) and megacomplex MCI(2)III(2)IV(2)). Found in a complex with TMEM177, COA6, COX18, COX20, SCO1 and SCO2. Interacts with TMEM177 in a COX20-dependent manner. Interacts with COX20. Interacts with COX16. It depends on Cu cation as a cofactor.

The protein resides in the mitochondrion inner membrane. It catalyses the reaction 4 Fe(II)-[cytochrome c] + O2 + 8 H(+)(in) = 4 Fe(III)-[cytochrome c] + 2 H2O + 4 H(+)(out). Component of the cytochrome c oxidase, the last enzyme in the mitochondrial electron transport chain which drives oxidative phosphorylation. The respiratory chain contains 3 multisubunit complexes succinate dehydrogenase (complex II, CII), ubiquinol-cytochrome c oxidoreductase (cytochrome b-c1 complex, complex III, CIII) and cytochrome c oxidase (complex IV, CIV), that cooperate to transfer electrons derived from NADH and succinate to molecular oxygen, creating an electrochemical gradient over the inner membrane that drives transmembrane transport and the ATP synthase. Cytochrome c oxidase is the component of the respiratory chain that catalyzes the reduction of oxygen to water. Electrons originating from reduced cytochrome c in the intermembrane space (IMS) are transferred via the dinuclear copper A center (CU(A)) of subunit 2 and heme A of subunit 1 to the active site in subunit 1, a binuclear center (BNC) formed by heme A3 and copper B (CU(B)). The BNC reduces molecular oxygen to 2 water molecules using 4 electrons from cytochrome c in the IMS and 4 protons from the mitochondrial matrix. The chain is Cytochrome c oxidase subunit 2 (MT-CO2) from Praomys taitae (Taita hill rat).